We begin with the raw amino-acid sequence, 114 residues long: Ribonuclease P protein component (114 aa).

The protein belongs to the RnpA family. Consists of a catalytic RNA component (M1 or rnpB) and a protein subunit.

The enzyme catalyses Endonucleolytic cleavage of RNA, removing 5'-extranucleotides from tRNA precursor.. In terms of biological role, RNaseP catalyzes the removal of the 5'-leader sequence from pre-tRNA to produce the mature 5'-terminus. It can also cleave other RNA substrates such as 4.5S RNA. The protein component plays an auxiliary but essential role in vivo by binding to the 5'-leader sequence and broadening the substrate specificity of the ribozyme. This chain is Ribonuclease P protein component, found in Borrelia turicatae (strain 91E135).